The following is a 603-amino-acid chain: Pentatricopeptide repeat-containing protein At2g02980, chloroplastic (603 aa).

The transit peptide at methionine 1–lysine 38 directs the protein to the chloroplast. PPR repeat units follow at residues aspartate 93–proline 127, aspartate 128–aspartate 162, asparagine 163–proline 193, cysteine 194–proline 228, asparagine 229–lysine 263, tyrosine 264–lysine 294, aspartate 295–proline 329, aspartate 330–proline 365, serine 366–methionine 400, and histidine 432–lysine 466. Residues leucine 401–asparagine 476 are type E motif. The type E(+) motif stretch occupies residues asparagine 477–lysine 507. The interval leucine 508–tryptophan 603 is type DYW motif.

The protein belongs to the PPR family. PCMP-H subfamily.

Its subcellular location is the plastid. It localises to the chloroplast. Functionally, involved in RNA editing event in chloroplasts. Required for the editing of a single site in ndhD transcript, which is a plastid-encoded subunits of the chloroplast NAD(P)H dehydrogenase (NDH) complex. Not essential for the activity of the NDH complex of the photosynthetic electron transport chain. This Arabidopsis thaliana (Mouse-ear cress) protein is Pentatricopeptide repeat-containing protein At2g02980, chloroplastic (PCMP-H26).